A 690-amino-acid polypeptide reads, in one-letter code: Protein AC23 (690 aa).

A signal peptide spans 1 to 37; the sequence is MLACKFSQYQAFIMDGVKLLGTCALIILLSTTSTVVG.

The protein resides in the virion. Functionally, pathogenicity factor that accelerates mortality in the host insect. This chain is Protein AC23, found in Autographa californica nuclear polyhedrosis virus (AcMNPV).